The primary structure comprises 1009 residues: Dihydropyrimidine dehydrogenase [NADP(+)] (1009 aa).

The 4Fe-4S ferredoxin-type 1 domain occupies 69 to 99; it reads RGALFESARCLKCADAPCQKGCPTQLDIKSF. Positions 78, 81, 86, and 90 each coordinate [4Fe-4S] cluster. Val128 provides a ligand contact to FAD. 4 residues coordinate [4Fe-4S] cluster: Cys129, Cys135, Cys139, and Gln155. FAD-binding positions include 193–197, 217–225, Arg234, and Leu260; these read GCGPT and EKEQYLGGL. NADP(+) is bound by residues 339–342, 363–364, Arg370, 436–438, and 479–484; these read AGDT, RR, AFG, and DLVGNG. Residue 478 to 486 participates in FAD binding; that stretch reads GDLVGNGTT. Residues Ser548 and 572-573 each bind FMN; that span reads KT. Substrate is bound by residues Asn607 and 666 to 668; that span reads NLS. The active-site Proton acceptor is Cys669. Lys707 lines the FMN pocket. 734 to 735 is a substrate binding site; sequence NT. FMN is bound by residues Gly765, 791 to 793, and 814 to 815; these read TGG and CS. 2 4Fe-4S ferredoxin-type domains span residues 932 to 964 and 965 to 995; these read VVALIDEDKCINCGKCYMTCNDSGYQAIKFDGK and THIPLVTDLCTGCDLCLSVCPVPDCITMVPR. Cys941, Cys944, Cys947, Cys951, Cys974, Cys977, Cys980, and Cys984 together coordinate [4Fe-4S] cluster.

The protein belongs to the dihydropyrimidine dehydrogenase family. Homodimer. [4Fe-4S] cluster is required as a cofactor. The cofactor is FAD. FMN serves as cofactor.

The protein resides in the cytoplasm. It catalyses the reaction 5,6-dihydrouracil + NADP(+) = uracil + NADPH + H(+). The protein operates within amino-acid biosynthesis; beta-alanine biosynthesis. In terms of biological role, involved in pyrimidine base degradation. Catalyzes the reduction of uracil and thymine. In Dictyostelium discoideum (Social amoeba), this protein is Dihydropyrimidine dehydrogenase [NADP(+)] (pyd1).